An 833-amino-acid polypeptide reads, in one-letter code: Leucine--tRNA ligase (833 aa).

The short motif at 41–52 is the 'HIGH' region element; sequence PYPSGAGLHVGH. A 'KMSKS' region motif is present at residues 610-614; that stretch reads KMSKS. Lys613 is a binding site for ATP.

This sequence belongs to the class-I aminoacyl-tRNA synthetase family.

Its subcellular location is the cytoplasm. It catalyses the reaction tRNA(Leu) + L-leucine + ATP = L-leucyl-tRNA(Leu) + AMP + diphosphate. The sequence is that of Leucine--tRNA ligase from Streptococcus pneumoniae (strain Taiwan19F-14).